Reading from the N-terminus, the 250-residue chain is Keratin-associated protein 9-1 (250 aa).

32 consecutive repeat copies span residues 8-12 (CCQPT), 13-17 (CCRTT), 18-22 (CCRTT), 37-41 (CCQPS), 42-46 (CCVPS), 51-55 (CCHPT), 56-60 (CCQNT), 61-65 (CCRTT), 66-70 (CCQPT), 75-79 (CCQPS), 80-84 (CCSTP), 85-89 (CCQPT), 90-94 (CCGSS), 95-99 (CCGQT), 105-109 (CCQPI), 114-117 (CCQP), 118-121 (CCHP), 133-137 (CCQPT), 138-142 (CCQPT), 143-147 (CCRNT), 153-157 (CCGSS), 162-166 (CCHPT), 167-171 (CCQTI), 176-180 (CCQPS), 185-189 (CCSTP), 190-194 (CCQPT), 214-218 (CCRPT), 219-223 (CCQTT), 229-233 (CCRPS), 234-238 (CCCSP), 239-243 (CCVSS), and 244-248 (CCQPS). Positions 8-248 (CCQPTCCRTT…CCVSSCCQPS (241 aa)) are 32 X 5 AA repeats of C-C-[CGSVRQH]-[SQTNP]-[PTSI].

It belongs to the KRTAP type 9 family. In terms of assembly, interacts with hair keratins.

In terms of biological role, in the hair cortex, hair keratin intermediate filaments are embedded in an interfilamentous matrix, consisting of hair keratin-associated proteins (KRTAP), which are essential for the formation of a rigid and resistant hair shaft through their extensive disulfide bond cross-linking with abundant cysteine residues of hair keratins. The matrix proteins include the high-sulfur and high-glycine-tyrosine keratins. The polypeptide is Keratin-associated protein 9-1 (Homo sapiens (Human)).